The chain runs to 261 residues: Acyl-[acyl-carrier-protein]--UDP-N-acetylglucosamine O-acyltransferase (261 aa).

Belongs to the transferase hexapeptide repeat family. LpxA subfamily. As to quaternary structure, homotrimer.

It localises to the cytoplasm. The catalysed reaction is a (3R)-hydroxyacyl-[ACP] + UDP-N-acetyl-alpha-D-glucosamine = a UDP-3-O-[(3R)-3-hydroxyacyl]-N-acetyl-alpha-D-glucosamine + holo-[ACP]. The protein operates within glycolipid biosynthesis; lipid IV(A) biosynthesis; lipid IV(A) from (3R)-3-hydroxytetradecanoyl-[acyl-carrier-protein] and UDP-N-acetyl-alpha-D-glucosamine: step 1/6. In terms of biological role, involved in the biosynthesis of lipid A, a phosphorylated glycolipid that anchors the lipopolysaccharide to the outer membrane of the cell. This is Acyl-[acyl-carrier-protein]--UDP-N-acetylglucosamine O-acyltransferase from Trichlorobacter lovleyi (strain ATCC BAA-1151 / DSM 17278 / SZ) (Geobacter lovleyi).